The following is a 190-amino-acid chain: Peptidyl-tRNA hydrolase (190 aa).

Tyr14 contributes to the tRNA binding site. The active-site Proton acceptor is the His19. Residues Tyr64, Asn66, and Asn112 each coordinate tRNA.

Belongs to the PTH family. As to quaternary structure, monomer.

The protein localises to the cytoplasm. It carries out the reaction an N-acyl-L-alpha-aminoacyl-tRNA + H2O = an N-acyl-L-amino acid + a tRNA + H(+). Functionally, hydrolyzes ribosome-free peptidyl-tRNAs (with 1 or more amino acids incorporated), which drop off the ribosome during protein synthesis, or as a result of ribosome stalling. Its function is as follows. Catalyzes the release of premature peptidyl moieties from peptidyl-tRNA molecules trapped in stalled 50S ribosomal subunits, and thus maintains levels of free tRNAs and 50S ribosomes. In Chlorobium luteolum (strain DSM 273 / BCRC 81028 / 2530) (Pelodictyon luteolum), this protein is Peptidyl-tRNA hydrolase.